The following is a 465-amino-acid chain: UDP-N-acetylmuramate--L-alanine ligase (465 aa).

112 to 118 contacts ATP; sequence GTHGKTT.

This sequence belongs to the MurCDEF family.

It is found in the cytoplasm. It catalyses the reaction UDP-N-acetyl-alpha-D-muramate + L-alanine + ATP = UDP-N-acetyl-alpha-D-muramoyl-L-alanine + ADP + phosphate + H(+). Its pathway is cell wall biogenesis; peptidoglycan biosynthesis. Its function is as follows. Cell wall formation. This is UDP-N-acetylmuramate--L-alanine ligase from Burkholderia multivorans (strain ATCC 17616 / 249).